The sequence spans 202 residues: NADH-quinone oxidoreductase subunit C (202 aa).

It belongs to the complex I 30 kDa subunit family. As to quaternary structure, NDH-1 is composed of 14 different subunits. Subunits NuoB, C, D, E, F, and G constitute the peripheral sector of the complex.

It localises to the cell inner membrane. It carries out the reaction a quinone + NADH + 5 H(+)(in) = a quinol + NAD(+) + 4 H(+)(out). Its function is as follows. NDH-1 shuttles electrons from NADH, via FMN and iron-sulfur (Fe-S) centers, to quinones in the respiratory chain. The immediate electron acceptor for the enzyme in this species is believed to be ubiquinone. Couples the redox reaction to proton translocation (for every two electrons transferred, four hydrogen ions are translocated across the cytoplasmic membrane), and thus conserves the redox energy in a proton gradient. This Brucella canis (strain ATCC 23365 / NCTC 10854 / RM-666) protein is NADH-quinone oxidoreductase subunit C.